Reading from the N-terminus, the 233-residue chain is Large ribosomal subunit protein uL1 (233 aa).

Belongs to the universal ribosomal protein uL1 family. As to quaternary structure, part of the 50S ribosomal subunit.

In terms of biological role, binds directly to 23S rRNA. The L1 stalk is quite mobile in the ribosome, and is involved in E site tRNA release. Its function is as follows. Protein L1 is also a translational repressor protein, it controls the translation of the L11 operon by binding to its mRNA. The polypeptide is Large ribosomal subunit protein uL1 (Nautilia profundicola (strain ATCC BAA-1463 / DSM 18972 / AmH)).